A 352-amino-acid chain; its full sequence is Pyruvate dehydrogenase E1 component subunit beta, mitochondrial (352 aa).

Residues 1–21 (MALRKCGNLFVARLAGTSTRA) constitute a mitochondrion transit peptide. E81 contacts thiamine diphosphate. Positions 134, 182, 183, 185, and 187 each coordinate K(+).

As to quaternary structure, tetramer of 2 alpha and 2 beta subunits. Thiamine diphosphate serves as cofactor.

It localises to the mitochondrion matrix. It catalyses the reaction N(6)-[(R)-lipoyl]-L-lysyl-[protein] + pyruvate + H(+) = N(6)-[(R)-S(8)-acetyldihydrolipoyl]-L-lysyl-[protein] + CO2. Functionally, the pyruvate dehydrogenase complex catalyzes the overall conversion of pyruvate to acetyl-CoA and CO(2). It contains multiple copies of three enzymatic components: pyruvate dehydrogenase (E1), dihydrolipoamide acetyltransferase (E2) and lipoamide dehydrogenase (E3). This Caenorhabditis elegans protein is Pyruvate dehydrogenase E1 component subunit beta, mitochondrial (pdhb-1).